The sequence spans 433 residues: uncharacterized protein (433 aa).

The N-terminal stretch at 1–26 is a signal peptide; that stretch reads MTRRAEFEMGLFVILQSMFLISLCSS. N-linked (GlcNAc...) asparagine glycans are attached at residues asparagine 59, asparagine 72, asparagine 125, asparagine 159, asparagine 210, asparagine 275, asparagine 282, and asparagine 323. Alanine 405 carries GPI-anchor amidated alanine lipidation. Residues 406–433 constitute a propeptide, removed in mature form; it reads SSQPRLHDEGVTRLVIFVLSMLLVMLLS.

The protein localises to the cell membrane. This is an uncharacterized protein from Arabidopsis thaliana (Mouse-ear cress).